Here is a 923-residue protein sequence, read N- to C-terminus: Meiotic recombination protein rec11 (923 aa).

The region spanning 278–365 (LFSRIHDIRA…DRFSLRIVEI (88 aa)) is the SCD domain.

The protein is Meiotic recombination protein rec11 (rec11) of Schizosaccharomyces pombe (strain 972 / ATCC 24843) (Fission yeast).